Consider the following 362-residue polypeptide: DNA replication and repair protein RecF (362 aa).

30–37 serves as a coordination point for ATP; that stretch reads GLNAQGKS.

This sequence belongs to the RecF family.

Its subcellular location is the cytoplasm. In terms of biological role, the RecF protein is involved in DNA metabolism; it is required for DNA replication and normal SOS inducibility. RecF binds preferentially to single-stranded, linear DNA. It also seems to bind ATP. The chain is DNA replication and repair protein RecF from Thermoanaerobacter sp. (strain X514).